The chain runs to 576 residues: Proline--tRNA ligase (576 aa).

This sequence belongs to the class-II aminoacyl-tRNA synthetase family. ProS type 1 subfamily. Homodimer.

It is found in the cytoplasm. The enzyme catalyses tRNA(Pro) + L-proline + ATP = L-prolyl-tRNA(Pro) + AMP + diphosphate. Its function is as follows. Catalyzes the attachment of proline to tRNA(Pro) in a two-step reaction: proline is first activated by ATP to form Pro-AMP and then transferred to the acceptor end of tRNA(Pro). As ProRS can inadvertently accommodate and process non-cognate amino acids such as alanine and cysteine, to avoid such errors it has two additional distinct editing activities against alanine. One activity is designated as 'pretransfer' editing and involves the tRNA(Pro)-independent hydrolysis of activated Ala-AMP. The other activity is designated 'posttransfer' editing and involves deacylation of mischarged Ala-tRNA(Pro). The misacylated Cys-tRNA(Pro) is not edited by ProRS. The polypeptide is Proline--tRNA ligase (Thiobacillus denitrificans (strain ATCC 25259 / T1)).